The chain runs to 527 residues: Phosphoethanolamine transferase OpgE (527 aa).

Topologically, residues 1 to 33 (MNLTLKESLVTRSRVFSPWTAFYFLQSLLINLG) are periplasmic. The helical transmembrane segment at 34 to 54 (LGYPFSLLYTAAFTAILLLLW) threads the bilayer. At 55–62 (RTLPRVQK) the chain is on the cytoplasmic side. Residues 63–83 (VLVGVSSLVAACYFPFAQAYG) form a helical membrane-spanning segment. Residues 84–106 (APNFNTLLALHSTNMEESTEILT) are Periplasmic-facing. Residues 107-127 (IFPWYSYLVGLFIFALGVIAI) form a helical membrane-spanning segment. Residues 128–146 (RRKKENEKARWNTFDSLCL) lie on the Cytoplasmic side of the membrane. A helical membrane pass occupies residues 147–167 (VFSVATFFVAPVQNLAWGGVF). Topologically, residues 168-527 (KLKDTGYPVF…LGTDIFDPKP (360 aa)) are periplasmic.

The protein belongs to the phosphoethanolamine transferase family.

It is found in the cell inner membrane. It participates in glycan metabolism; osmoregulated periplasmic glucan (OPG) biosynthesis. In terms of biological role, catalyzes the addition of a phosphoethanolamine moiety to the osmoregulated periplasmic glucan (OPG) backbone. The polypeptide is Phosphoethanolamine transferase OpgE (opgE) (Escherichia coli (strain K12)).